A 268-amino-acid polypeptide reads, in one-letter code: DNA repair protein RecO (268 aa).

This sequence belongs to the RecO family.

Functionally, involved in DNA repair and RecF pathway recombination. In Parasynechococcus marenigrum (strain WH8102), this protein is DNA repair protein RecO.